A 635-amino-acid chain; its full sequence is 5-aminolevulinate synthase, non-specific, mitochondrial (635 aa).

A mitochondrion-targeting transit peptide spans 1-56; the sequence is MEAVVRRCPFLARVSQAFLQKAGPSLLFYAQHCPKMMEAAPPAAARGLATSASRGQ. Residues 44–66 show a composition bias toward low complexity; sequence AARGLATSASRGQQVEETPAAQP. Residues 44-94 form a disordered region; the sequence is AARGLATSASRGQQVEETPAAQPEAKKAKEVAQQNTDGSQPPAGHPPAAAV. Residues R212, S329, and K348 each coordinate substrate. Residues S381, H409, and T437 each contribute to the pyridoxal 5'-phosphate site. The active site involves K440. An N6-(pyridoxal phosphate)lysine modification is found at K440. T469 and T470 together coordinate pyridoxal 5'-phosphate. Residue T557 participates in substrate binding.

The protein belongs to the class-II pyridoxal-phosphate-dependent aminotransferase family. In terms of assembly, homodimer. Requires pyridoxal 5'-phosphate as cofactor. As to expression, ubiquitous.

It localises to the mitochondrion inner membrane. It catalyses the reaction succinyl-CoA + glycine + H(+) = 5-aminolevulinate + CO2 + CoA. The protein operates within porphyrin-containing compound metabolism; protoporphyrin-IX biosynthesis; 5-aminolevulinate from glycine: step 1/1. Its function is as follows. Catalyzes the pyridoxal 5'-phosphate (PLP)-dependent condensation of succinyl-CoA and glycine to form aminolevulinic acid (ALA), with CoA and CO2 as by-products. This Gallus gallus (Chicken) protein is 5-aminolevulinate synthase, non-specific, mitochondrial (ALAS1).